A 312-amino-acid polypeptide reads, in one-letter code: Glycerol-3-phosphate dehydrogenase [NAD(P)+] (312 aa).

NADPH is bound by residues Trp-11, Arg-30, Arg-31, and Lys-95. Lys-95, Gly-123, and Ser-125 together coordinate sn-glycerol 3-phosphate. Ala-127 is an NADPH binding site. Sn-glycerol 3-phosphate is bound by residues Lys-177, Asp-230, Ser-240, Arg-241, and Asn-242. Lys-177 acts as the Proton acceptor in catalysis. Arg-241 contacts NADPH. 2 residues coordinate NADPH: Val-265 and Glu-267.

The protein belongs to the NAD-dependent glycerol-3-phosphate dehydrogenase family.

Its subcellular location is the cytoplasm. The catalysed reaction is sn-glycerol 3-phosphate + NAD(+) = dihydroxyacetone phosphate + NADH + H(+). The enzyme catalyses sn-glycerol 3-phosphate + NADP(+) = dihydroxyacetone phosphate + NADPH + H(+). The protein operates within membrane lipid metabolism; glycerophospholipid metabolism. In terms of biological role, catalyzes the reduction of the glycolytic intermediate dihydroxyacetone phosphate (DHAP) to sn-glycerol 3-phosphate (G3P), the key precursor for phospholipid synthesis. The polypeptide is Glycerol-3-phosphate dehydrogenase [NAD(P)+] (Helicobacter acinonychis (strain Sheeba)).